The following is a 3674-amino-acid chain: Dystrophin-1 (3674 aa).

Positions 1–25 (MLFSGASTAKPKKDEKKDKKSDRDP) are disordered. Basic and acidic residues predominate over residues 11-25 (PKKDEKKDKKSDRDP). The tract at residues 30-39 (QEWVFVRWAN) is actin-binding. A Calponin-homology (CH) domain is found at 129–234 (EKLSEAIKQW…YLMSLYLAMI (106 aa)). The segment at 265-325 (SQPSTSSSSA…KSGKSKKARR (61 aa)) is disordered. Spectrin repeat units follow at residues 327-435 (EQLA…VLQQ), 436-541 (QIHL…KLDG), and 612-656 (CELV…TLVK). Positions 655-674 (VKSGKADVKQVQESQNEQKE) are enriched in basic and acidic residues. 5 disordered regions span residues 655–689 (VKSGKADVKQVQESQNEQKEQPASSEGLSTDTEGE), 968–991 (NSQMSNETVEKAETRKAEMEEKRR), 1587–1606 (ASAEKAPAPELRDARLSSPS), 1796–1833 (LSATEKKPVETVKSTIPDRPEVPEEPEKSSPDRTSRSS), and 2387–2466 (MNDS…GSTG). Positions 675–685 (QPASSEGLSTD) are enriched in polar residues. Over residues 975-991 (TVEKAETRKAEMEEKRR) the composition is skewed to basic and acidic residues. Over residues 1796 to 1830 (LSATEKKPVETVKSTIPDRPEVPEEPEKSSPDRTS) the composition is skewed to basic and acidic residues. Polar residues predominate over residues 2391–2411 (GGDTTESRSTVVEMTSVHTKQ). Spectrin repeat units lie at residues 2576 to 2673 (RNEM…VLEA), 2725 to 2789 (FKTL…RLEK), 2792 to 2905 (QEWE…RLKK), and 2926 to 3032 (QRLQ…AVRN). Positions 3047–3081 (QSVTLPWQRAISKSNLLPYYIEQTSEKTQWEHPVW) constitute a WW domain. The ZZ-type zinc finger occupies 3301–3357 (KHASKCNVCKMFPIIGIRYRCLTCFNCDLCQNCFFSQRTAKSHRTNHPMQEYCEKTT). Zn(2+) is bound by residues cysteine 3306, cysteine 3309, cysteine 3321, cysteine 3324, cysteine 3330, cysteine 3333, histidine 3343, and histidine 3347. 2 disordered regions span residues 3481–3522 (STME…TQSQ) and 3568–3645 (KQQA…QMQN). The segment covering 3568–3579 (KQQAPLSTNSLL) has biased composition (polar residues).

Component of the dystrophin glycoprotein complex (DGC). Interacts with dyb-1 and stn-1 to form the DGC. Interacts with stn-2. As to expression, expressed in body wall, head, pharyngeal and vulval muscles, from late embryogenesis to adulthood (at protein level).

The protein resides in the cell membrane. It localises to the sarcolemma. It is found in the cytoplasm. The protein localises to the cytoskeleton. Functionally, plays a role in cholinergic transmission and as a functional partner of dystrobrevin (dyb-1), necessary for muscle maintenance. Required for neuronal positioning. May play a role in the localization of slo-1 near dense bodies in the muscle. This chain is Dystrophin-1 (dys-1), found in Caenorhabditis elegans.